A 255-amino-acid polypeptide reads, in one-letter code: 5-oxoprolinase subunit A (255 aa).

Belongs to the LamB/PxpA family. As to quaternary structure, forms a complex composed of PxpA, PxpB and PxpC.

The catalysed reaction is 5-oxo-L-proline + ATP + 2 H2O = L-glutamate + ADP + phosphate + H(+). Its function is as follows. Catalyzes the cleavage of 5-oxoproline to form L-glutamate coupled to the hydrolysis of ATP to ADP and inorganic phosphate. The sequence is that of 5-oxoprolinase subunit A from Thermococcus onnurineus (strain NA1).